The primary structure comprises 297 residues: tRNA-cytidine(32) 2-sulfurtransferase (297 aa).

The PP-loop motif signature appears at serine 61–serine 66. 3 residues coordinate [4Fe-4S] cluster: cysteine 136, cysteine 139, and cysteine 227.

The protein belongs to the TtcA family. In terms of assembly, homodimer. Mg(2+) is required as a cofactor. [4Fe-4S] cluster serves as cofactor.

The protein resides in the cytoplasm. The catalysed reaction is cytidine(32) in tRNA + S-sulfanyl-L-cysteinyl-[cysteine desulfurase] + AH2 + ATP = 2-thiocytidine(32) in tRNA + L-cysteinyl-[cysteine desulfurase] + A + AMP + diphosphate + H(+). The protein operates within tRNA modification. Its function is as follows. Catalyzes the ATP-dependent 2-thiolation of cytidine in position 32 of tRNA, to form 2-thiocytidine (s(2)C32). The sulfur atoms are provided by the cysteine/cysteine desulfurase (IscS) system. This chain is tRNA-cytidine(32) 2-sulfurtransferase, found in Paracoccus denitrificans (strain Pd 1222).